The primary structure comprises 198 residues: Recombination protein RecR (198 aa).

The segment at 57 to 72 adopts a C4-type zinc-finger fold; sequence CAMCNTFTESAVCETC. Residues 80–175 enclose the Toprim domain; it reads ALLCVVETPG…KVSRLARGVP (96 aa).

It belongs to the RecR family.

May play a role in DNA repair. It seems to be involved in an RecBC-independent recombinational process of DNA repair. It may act with RecF and RecO. This is Recombination protein RecR from Herminiimonas arsenicoxydans.